Here is a 192-residue protein sequence, read N- to C-terminus: Adenylate kinase (192 aa).

Residue 12–17 (GSGKTT) coordinates ATP. Residues 34 to 63 (STGDLLRAQVASGSELGKTIDSFISKGNLV) form an NMP region. Residues Thr35, Arg40, 61 to 63 (NLV), 88 to 91 (GYPR), and Gln95 contribute to the AMP site. The LID stretch occupies residues 130-136 (GRNRGAD). ATP is bound at residue Arg131. Residues Arg133 and Arg145 each contribute to the AMP site. Arg173 provides a ligand contact to ATP.

The protein belongs to the adenylate kinase family. In terms of assembly, monomer.

It localises to the cytoplasm. It carries out the reaction AMP + ATP = 2 ADP. Its pathway is purine metabolism; AMP biosynthesis via salvage pathway; AMP from ADP: step 1/1. Its function is as follows. Catalyzes the reversible transfer of the terminal phosphate group between ATP and AMP. Plays an important role in cellular energy homeostasis and in adenine nucleotide metabolism. In Campylobacter jejuni subsp. doylei (strain ATCC BAA-1458 / RM4099 / 269.97), this protein is Adenylate kinase.